The primary structure comprises 559 residues: MAGIYARSWPSLFRLYMRCAGTRCSGHGWQNALESKGLLYFLPSSYLPIQAHIRLYSSSDQKEDGGSKGTSAASSPEKSMAGLDPSKPEQKSTFPPDPIQVKVKAVLKKREYGTKYMKNNFITGVRALNEFCLKPSDLESLRKIRRRSPHDDTEAFTVYLRSDVEAKAYEVWGSPEAIFRERKMRKEEEIAYRENLFRNQKLLKEYKDFLGNTKPRLSTTNMFMKGPGKVVIVAICINGLNFFFKLLAWVYTGSASMFSEALHSLADTLNQALLALGISQSARTPDPGHPYGFTNMRYIASLISGVGIFMMGAGLSWYHGIIGLLHPQPIESLLWAYCILAGSLVSEGATLLVAINEIRKSSRAKGLSFYQYVMQSRDPSTNVVLMEDAAAVLGLVMAASCMGLTSLTGNPLYDSLGSLGVGTLLGAVSAFLIYTNTEALIGRSIQPDQVQRLTELLESDPAVRAIHDVKATDMGMSKVRFKAEVDFDGRVVTRSYLEKQDIDLVLNEIRQVKTAEDLEAFMLKHGENIIDTLGAEVDRLEKELKQRNPEVRHVDLEIL.

The tract at residues 58–96 (SSDQKEDGGSKGTSAASSPEKSMAGLDPSKPEQKSTFPP) is disordered. Transmembrane regions (helical) follow at residues 230–250 (VVIV…LAWV), 305–325 (GVGI…IGLL), 333–353 (LLWA…TLLV), 389–409 (AAAV…SLTG), and 415–435 (SLGS…LIYT). Residues 453 to 457 (LTELL) carry the LXXLL motif motif.

Belongs to the cation diffusion facilitator (CDF) transporter (TC 2.A.4) family. SLC30A subfamily.

It localises to the mitochondrion membrane. It is found in the nucleus. The protein localises to the endoplasmic reticulum. The enzyme catalyses Zn(2+)(in) + 2 H(+)(out) = Zn(2+)(out) + 2 H(+)(in). Its function is as follows. Mitochondrial proton-coupled zinc ion antiporter mediating the export of zinc from the mitochondria and involved in zinc homeostasis, zinc mobilization as well as mitochondrial morphology and health. In nucleus, may function as a secondary coactivator for nuclear receptors. The chain is Proton-coupled zinc antiporter SLC30A9, mitochondrial (slc30a9) from Xenopus laevis (African clawed frog).